We begin with the raw amino-acid sequence, 99 residues long: Aspartyl/glutamyl-tRNA(Asn/Gln) amidotransferase subunit C (99 aa).

Belongs to the GatC family. Heterotrimer of A, B and C subunits.

It catalyses the reaction L-glutamyl-tRNA(Gln) + L-glutamine + ATP + H2O = L-glutaminyl-tRNA(Gln) + L-glutamate + ADP + phosphate + H(+). It carries out the reaction L-aspartyl-tRNA(Asn) + L-glutamine + ATP + H2O = L-asparaginyl-tRNA(Asn) + L-glutamate + ADP + phosphate + 2 H(+). Functionally, allows the formation of correctly charged Asn-tRNA(Asn) or Gln-tRNA(Gln) through the transamidation of misacylated Asp-tRNA(Asn) or Glu-tRNA(Gln) in organisms which lack either or both of asparaginyl-tRNA or glutaminyl-tRNA synthetases. The reaction takes place in the presence of glutamine and ATP through an activated phospho-Asp-tRNA(Asn) or phospho-Glu-tRNA(Gln). The polypeptide is Aspartyl/glutamyl-tRNA(Asn/Gln) amidotransferase subunit C (Orientia tsutsugamushi (strain Ikeda) (Rickettsia tsutsugamushi)).